The primary structure comprises 377 residues: Succinyl-diaminopimelate desuccinylase (377 aa).

His67 is a binding site for Zn(2+). Asp69 is a catalytic residue. Residue Asp100 participates in Zn(2+) binding. Glu134 serves as the catalytic Proton acceptor. Zn(2+) contacts are provided by Glu135, Glu163, and His349.

The protein belongs to the peptidase M20A family. DapE subfamily. As to quaternary structure, homodimer. It depends on Zn(2+) as a cofactor. The cofactor is Co(2+).

The catalysed reaction is N-succinyl-(2S,6S)-2,6-diaminopimelate + H2O = (2S,6S)-2,6-diaminopimelate + succinate. It functions in the pathway amino-acid biosynthesis; L-lysine biosynthesis via DAP pathway; LL-2,6-diaminopimelate from (S)-tetrahydrodipicolinate (succinylase route): step 3/3. Functionally, catalyzes the hydrolysis of N-succinyl-L,L-diaminopimelic acid (SDAP), forming succinate and LL-2,6-diaminopimelate (DAP), an intermediate involved in the bacterial biosynthesis of lysine and meso-diaminopimelic acid, an essential component of bacterial cell walls. The sequence is that of Succinyl-diaminopimelate desuccinylase from Haemophilus influenzae (strain 86-028NP).